The primary structure comprises 1378 residues: DNA-directed RNA polymerase subunit beta (1378 aa).

Belongs to the RNA polymerase beta chain family. The RNAP catalytic core consists of 2 alpha, 1 beta, 1 beta' and 1 omega subunit. When a sigma factor is associated with the core the holoenzyme is formed, which can initiate transcription.

It catalyses the reaction RNA(n) + a ribonucleoside 5'-triphosphate = RNA(n+1) + diphosphate. Functionally, DNA-dependent RNA polymerase catalyzes the transcription of DNA into RNA using the four ribonucleoside triphosphates as substrates. The chain is DNA-directed RNA polymerase subunit beta from Dinoroseobacter shibae (strain DSM 16493 / NCIMB 14021 / DFL 12).